A 424-amino-acid chain; its full sequence is Tyrosine--tRNA ligase (424 aa).

Tyr37 is an L-tyrosine binding site. The 'HIGH' region signature appears at 42-51; sequence PTADSLHLGH. L-tyrosine-binding residues include Tyr175 and Gln179. A 'KMSKS' region motif is present at residues 235–239; sequence KFGKT. An ATP-binding site is contributed by Lys238. Residues 357 to 414 enclose the S4 RNA-binding domain; sequence ADLQQALVNAELVPSRGQARTMISSNAVAINGEKQSDPEYAFTDADRLFGRYTLLRRG.

The protein belongs to the class-I aminoacyl-tRNA synthetase family. TyrS type 1 subfamily. In terms of assembly, homodimer.

It is found in the cytoplasm. The enzyme catalyses tRNA(Tyr) + L-tyrosine + ATP = L-tyrosyl-tRNA(Tyr) + AMP + diphosphate + H(+). Functionally, catalyzes the attachment of tyrosine to tRNA(Tyr) in a two-step reaction: tyrosine is first activated by ATP to form Tyr-AMP and then transferred to the acceptor end of tRNA(Tyr). In Yersinia enterocolitica serotype O:8 / biotype 1B (strain NCTC 13174 / 8081), this protein is Tyrosine--tRNA ligase.